Here is a 793-residue protein sequence, read N- to C-terminus: Phenylalanine--tRNA ligase beta subunit (793 aa).

In terms of domain architecture, tRNA-binding spans 39 to 148 (AGQFTHVIVA…DEAPIGMDLR (110 aa)). Residues 401–477 (PGTVSFLFDT…RLYGYDKLQA (77 aa)) enclose the B5 domain. 4 residues coordinate Mg(2+): Asp-455, Asp-461, Glu-464, and Glu-465. In terms of domain architecture, FDX-ACB spans 698–792 (SKYPQIRRDL…LENEFSILLR (95 aa)).

This sequence belongs to the phenylalanyl-tRNA synthetase beta subunit family. Type 1 subfamily. Tetramer of two alpha and two beta subunits. Mg(2+) serves as cofactor.

The protein resides in the cytoplasm. The catalysed reaction is tRNA(Phe) + L-phenylalanine + ATP = L-phenylalanyl-tRNA(Phe) + AMP + diphosphate + H(+). The protein is Phenylalanine--tRNA ligase beta subunit of Legionella pneumophila (strain Lens).